The primary structure comprises 384 residues: Probable L-tyrosine/L-aspartate decarboxylase (384 aa).

Residue Lys-233 is modified to N6-(pyridoxal phosphate)lysine.

It belongs to the group II decarboxylase family. MfnA subfamily. Pyridoxal 5'-phosphate is required as a cofactor.

The catalysed reaction is L-tyrosine + H(+) = tyramine + CO2. It catalyses the reaction L-aspartate + H(+) = beta-alanine + CO2. The protein operates within cofactor biosynthesis; methanofuran biosynthesis. Its pathway is cofactor biosynthesis; coenzyme A biosynthesis. Catalyzes the decarboxylation of L-tyrosine to produce tyramine for methanofuran biosynthesis. Can also catalyze the decarboxylation of L-aspartate to produce beta-alanine for coenzyme A (CoA) biosynthesis. This chain is Probable L-tyrosine/L-aspartate decarboxylase, found in Methanococcus maripaludis (strain C5 / ATCC BAA-1333).